The following is a 359-amino-acid chain: Alanine racemase, biosynthetic (359 aa).

K34 (proton acceptor; specific for D-alanine) is an active-site residue. The residue at position 34 (K34) is an N6-(pyridoxal phosphate)lysine. R129 is a binding site for substrate. Catalysis depends on Y255, which acts as the Proton acceptor; specific for L-alanine. Residue M303 participates in substrate binding.

Belongs to the alanine racemase family. In terms of assembly, monomer but homodimer in the presence of the substrate. Pyridoxal 5'-phosphate serves as cofactor.

The catalysed reaction is L-alanine = D-alanine. The protein operates within amino-acid biosynthesis; D-alanine biosynthesis; D-alanine from L-alanine: step 1/1. It participates in cell wall biogenesis; peptidoglycan biosynthesis. Its function is as follows. Catalyzes the interconversion of L-alanine and D-alanine. This chain is Alanine racemase, biosynthetic (alr), found in Shigella dysenteriae.